Consider the following 315-residue polypeptide: THO complex subunit 3 (315 aa).

WD repeat units follow at residues 18–57 (GHKKKVHSVAWNSNGTKLASGSVDQTARIWNIEPHGHSKA), 64–104 (GHTD…CTQQ), 106–145 (ELSGENINITYKPDGTHVAVGNRDDELTILDVRKFKPLHR), 189–228 (AHTAGCYCIAIDPKGRYFAVGSADSLVSLWDISDMLCLRT), 231–270 (KLEWPVRTISFNYSGEYIASASEDLFIDIANVQTGRTVHQ), and 272–311 (PCRAAMNSVEWNPKYNLLAYAGDDKNPKYNTDEGVFRIFG).

Belongs to the THOC3 family. Component of the THO complex, which is composed of THO1, THO2, THO3, THO5, THO6 and THO7.

Its subcellular location is the nucleus. Acts as a component of the THO subcomplex of the TREX complex which is thought to couple mRNA transcription, processing and nuclear export. Contributes to the integrity of the endogenous trans-acting small interfering RNA (ta-siRNA) pathway. May process or transport a long RNA molecule so that it can be a template for secondary siRNA production. May participate in the trafficking of siRNA precursors to the ARGONAUTE catalytic center. Required for the generation of functional messenger ribonucleoproteins (mRNPs). The polypeptide is THO complex subunit 3 (THO3) (Arabidopsis thaliana (Mouse-ear cress)).